A 540-amino-acid chain; its full sequence is L-aspartate oxidase (540 aa).

FAD contacts are provided by residues 16–19 (SGAA), Lys38, 45–52 (STFYAQGG), 161–162 (NA), and Asp223. Succinate contacts are provided by residues His244 and 259–260 (TE). The active-site Proton donor/acceptor is Arg290. Residue Glu375 participates in FAD binding. Ser389 serves as a coordination point for succinate. An FAD-binding site is contributed by 391–392 (SL).

It belongs to the FAD-dependent oxidoreductase 2 family. NadB subfamily. As to quaternary structure, monomer. Homodimer. Both the monomeric and dimeric forms of the enzyme are catalytically active. The cofactor is FAD.

Its subcellular location is the cytoplasm. It catalyses the reaction L-aspartate + O2 = iminosuccinate + H2O2. It carries out the reaction fumarate + L-aspartate = iminosuccinate + succinate. The protein operates within cofactor biosynthesis; NAD(+) biosynthesis; iminoaspartate from L-aspartate (oxidase route): step 1/1. Its activity is regulated as follows. Inhibited by the product iminoaspartate. Competitively inhibited by mesotartrate. NAD acts as a competitive inhibitor to FAD. Inhibited by iodoacetic acid, diethylpyrocarbonate and tetranitromethane. In terms of biological role, catalyzes the oxidation of L-aspartate to iminoaspartate, the first step in the de novo biosynthesis of NAD(+). Can use either oxygen or fumarate as electron acceptors, which allows the enzyme to be functional under aerobic and anaerobic conditions. In vivo, fumarate is used under anaerobic conditions, and oxygen is the predominant electron acceptor under aerobic conditions due to the lower fumarate levels. In vitro, fumarate is a more efficient electron acceptor and is kinetically superior to oxygen. The sequence is that of L-aspartate oxidase from Escherichia coli (strain K12).